The chain runs to 144 residues: Neuritin-B (144 aa).

Positions 1-27 (MGLKLSGRYIFLVLAVHLAYLLQAVKA) are cleaved as a signal peptide. A lipid anchor (GPI-anchor amidated serine) is attached at Ser114. The propeptide at 115 to 144 (TGAPGPRLLFPAFLPLLIVFLSALLNWVLQ) is removed in mature form.

The protein belongs to the neuritin family.

Its subcellular location is the cell membrane. Modulates postsynaptic dendritic arbor elaboration and synaptic maturation. This Xenopus laevis (African clawed frog) protein is Neuritin-B (nrn1-b).